The following is a 455-amino-acid chain: tRNA modification GTPase MnmE (455 aa).

Residues arginine 24, glutamate 86, and arginine 125 each coordinate (6S)-5-formyl-5,6,7,8-tetrahydrofolate. The region spanning 220-376 is the TrmE-type G domain; it reads GLTVAIIGRP…LETAILETVQ (157 aa). Asparagine 230 contacts K(+). GTP contacts are provided by residues 230-235, 249-255, and 274-277; these read NVGKSS, TDLPGTT, and DTAG. Serine 234 is a Mg(2+) binding site. Residues threonine 249, leucine 251, and threonine 254 each contribute to the K(+) site. Threonine 255 contacts Mg(2+). Residue lysine 455 coordinates (6S)-5-formyl-5,6,7,8-tetrahydrofolate.

This sequence belongs to the TRAFAC class TrmE-Era-EngA-EngB-Septin-like GTPase superfamily. TrmE GTPase family. As to quaternary structure, homodimer. Heterotetramer of two MnmE and two MnmG subunits. The cofactor is K(+).

It is found in the cytoplasm. Exhibits a very high intrinsic GTPase hydrolysis rate. Involved in the addition of a carboxymethylaminomethyl (cmnm) group at the wobble position (U34) of certain tRNAs, forming tRNA-cmnm(5)s(2)U34. This is tRNA modification GTPase MnmE from Acaryochloris marina (strain MBIC 11017).